The sequence spans 328 residues: Eukaryotic translation initiation factor 3 subunit I (328 aa).

WD repeat units follow at residues 8 to 47 (GHER…RLGT), 50 to 91 (GHQG…GTIP), 148 to 187 (SIQT…ELNS), 190 to 229 (DHTG…CLKT), and 287 to 328 (GHFG…FVFE).

The protein belongs to the eIF-3 subunit I family. In terms of assembly, component of the eukaryotic translation initiation factor 3 (eIF-3) complex.

The protein resides in the cytoplasm. Component of the eukaryotic translation initiation factor 3 (eIF-3) complex, which is involved in protein synthesis of a specialized repertoire of mRNAs and, together with other initiation factors, stimulates binding of mRNA and methionyl-tRNAi to the 40S ribosome. The eIF-3 complex specifically targets and initiates translation of a subset of mRNAs involved in cell proliferation. The chain is Eukaryotic translation initiation factor 3 subunit I from Culex quinquefasciatus (Southern house mosquito).